The primary structure comprises 835 residues: Phenylalanine--tRNA ligase beta subunit (835 aa).

In terms of domain architecture, tRNA-binding spans 44 to 160 (PETTGPLVFG…SYGEPGEDAR (117 aa)). Positions 419–494 (PAMQPITMKV…RLEGLEAIPT (76 aa)) constitute a B5 domain. 4 residues coordinate Mg(2+): D472, D478, E481, and E482. The region spanning 741 to 834 (SSFPALHQDI…AKEKFNAEMR (94 aa)) is the FDX-ACB domain.

Belongs to the phenylalanyl-tRNA synthetase beta subunit family. Type 1 subfamily. In terms of assembly, tetramer of two alpha and two beta subunits. Mg(2+) is required as a cofactor.

The protein resides in the cytoplasm. The enzyme catalyses tRNA(Phe) + L-phenylalanine + ATP = L-phenylalanyl-tRNA(Phe) + AMP + diphosphate + H(+). In Corynebacterium glutamicum (strain ATCC 13032 / DSM 20300 / JCM 1318 / BCRC 11384 / CCUG 27702 / LMG 3730 / NBRC 12168 / NCIMB 10025 / NRRL B-2784 / 534), this protein is Phenylalanine--tRNA ligase beta subunit.